Reading from the N-terminus, the 429-residue chain is Aspartate--tRNA(Asp/Asn) ligase (429 aa).

Residue E166 participates in L-aspartate binding. An aspartate region spans residues 188 to 191 (QLYK). Residue R210 coordinates L-aspartate. ATP-binding positions include 210-212 (RAE), 218-220 (RHL), and E352. E352 and S355 together coordinate Mg(2+). L-aspartate is bound by residues S355 and R359. 400-403 (GIER) lines the ATP pocket.

It belongs to the class-II aminoacyl-tRNA synthetase family. Type 2 subfamily. In terms of assembly, homodimer. Mg(2+) is required as a cofactor.

It localises to the cytoplasm. It carries out the reaction tRNA(Asx) + L-aspartate + ATP = L-aspartyl-tRNA(Asx) + AMP + diphosphate. Functionally, aspartyl-tRNA synthetase with relaxed tRNA specificity since it is able to aspartylate not only its cognate tRNA(Asp) but also tRNA(Asn). Reaction proceeds in two steps: L-aspartate is first activated by ATP to form Asp-AMP and then transferred to the acceptor end of tRNA(Asp/Asn). This chain is Aspartate--tRNA(Asp/Asn) ligase, found in Methanoculleus marisnigri (strain ATCC 35101 / DSM 1498 / JR1).